A 300-amino-acid polypeptide reads, in one-letter code: Protoheme IX farnesyltransferase (300 aa).

The next 8 membrane-spanning stretches (helical) occupy residues 24–44, 46–66, 94–114, 118–138, 146–166, 172–192, 224–244, and 278–298; these read VTQL…PGMV, WHVL…AFAI, PQIL…LYTF, LTMW…TLLL, IVIG…AVTG, AWIL…VLAL, VILF…VVYL, and IVYL…RPLL.

This sequence belongs to the UbiA prenyltransferase family. Protoheme IX farnesyltransferase subfamily.

The protein resides in the cell inner membrane. The enzyme catalyses heme b + (2E,6E)-farnesyl diphosphate + H2O = Fe(II)-heme o + diphosphate. It functions in the pathway porphyrin-containing compound metabolism; heme O biosynthesis; heme O from protoheme: step 1/1. Converts heme B (protoheme IX) to heme O by substitution of the vinyl group on carbon 2 of heme B porphyrin ring with a hydroxyethyl farnesyl side group. This Burkholderia ambifaria (strain MC40-6) protein is Protoheme IX farnesyltransferase.